A 167-amino-acid chain; its full sequence is Putative 4-hydroxy-4-methyl-2-oxoglutarate aldolase (167 aa).

Substrate is bound by residues 81–84 and Arg103; that span reads GDII. Residue Asp104 coordinates a divalent metal cation.

This sequence belongs to the class II aldolase/RraA-like family. As to quaternary structure, homotrimer. Requires a divalent metal cation as cofactor.

The catalysed reaction is 4-hydroxy-4-methyl-2-oxoglutarate = 2 pyruvate. The enzyme catalyses oxaloacetate + H(+) = pyruvate + CO2. In terms of biological role, catalyzes the aldol cleavage of 4-hydroxy-4-methyl-2-oxoglutarate (HMG) into 2 molecules of pyruvate. Also contains a secondary oxaloacetate (OAA) decarboxylase activity due to the common pyruvate enolate transition state formed following C-C bond cleavage in the retro-aldol and decarboxylation reactions. The sequence is that of Putative 4-hydroxy-4-methyl-2-oxoglutarate aldolase from Corynebacterium jeikeium (strain K411).